The primary structure comprises 498 residues: MRTNPTTSSPVVPTLEEKNLGRIAQIIGPVLDVVFPPGKMPNIYNALVVKGRDTVGQQINVTCEVQQLLGNNRVRAVAMSATDGLMRGMEVIDTGAPLSVPVGGATLGRIFNVLGEPVDNLGPVDTRTTSPIHRSAPAFIQLDTKLSIFETGIKVVDLLAPYRRGGKIGLFGGAGVGKTVLIMELINNIAKAHGGVSVFGGVGERTREGNDLYMEMKESGVINEKNIAESKVALVYGQMNEPPGARMRVGLTALTMAEYFRDVNEQDVLLFIDNIFRFVQAGSEVSALLGRMPSAVGYQPTLSTEMGSLQERITSTKEGSITSIQAVYVPADDLTDPAPATTFAHLDATTVLSRVLAAKGIYPAVDPLDSTSTMLQPRIVGEEHYETAQRVKQTSQRYKELQDIIAILGLDELSEEDRLTVARARKIERFLSQPFFVAEVFTGSPGKYVGLAETIRGFQLILSGELDGLPEQAFYLVGNIDEATAKAMNLEVESKLKK.

ATP is bound at residue 172-179; the sequence is GGAGVGKT.

Belongs to the ATPase alpha/beta chains family. In terms of assembly, F-type ATPases have 2 components, CF(1) - the catalytic core - and CF(0) - the membrane proton channel. CF(1) has five subunits: alpha(3), beta(3), gamma(1), delta(1), epsilon(1). CF(0) has four main subunits: a(1), b(1), b'(1) and c(9-12).

It localises to the plastid. Its subcellular location is the chloroplast thylakoid membrane. The catalysed reaction is ATP + H2O + 4 H(+)(in) = ADP + phosphate + 5 H(+)(out). Functionally, produces ATP from ADP in the presence of a proton gradient across the membrane. The catalytic sites are hosted primarily by the beta subunits. In Elaeis oleifera (American oil palm), this protein is ATP synthase subunit beta, chloroplastic.